The sequence spans 263 residues: MARRPLVMGNWKLNGSKAFTKELIEGLKAELHDVTGCDVAIAPPVMYLGTAEAALSGCGCSCGGKSVIQLGAQNVDINVKGAFTGDISSEMLKDFGAKYIIIGHSERRTYHKESDEFVAKKFGALKEAGLVPVLCIGESEAENEAGKTEEVCARQIDAVINALGVEAFNGAVIAYEPIWAIGTGKSATPAQAQAVHAFIRGHIAAKSQAVAEQVIIQYGGSVNDANAAELFTQPDIDGALVGGASLKAPAFAVIVKAAAAAKN.

Residue 10–12 (NWK) participates in substrate binding. His-104 acts as the Electrophile in catalysis. Glu-176 acts as the Proton acceptor in catalysis. Substrate-binding positions include Gly-182, Ser-221, and 242 to 243 (GG).

Belongs to the triosephosphate isomerase family. In terms of assembly, homodimer.

The protein resides in the cytoplasm. It catalyses the reaction D-glyceraldehyde 3-phosphate = dihydroxyacetone phosphate. It functions in the pathway carbohydrate biosynthesis; gluconeogenesis. It participates in carbohydrate degradation; glycolysis; D-glyceraldehyde 3-phosphate from glycerone phosphate: step 1/1. Involved in the gluconeogenesis. Catalyzes stereospecifically the conversion of dihydroxyacetone phosphate (DHAP) to D-glyceraldehyde-3-phosphate (G3P). The protein is Triosephosphate isomerase of Haemophilus influenzae (strain 86-028NP).